Reading from the N-terminus, the 230-residue chain is Sugar fermentation stimulation protein homolog (230 aa).

The protein belongs to the SfsA family.

The sequence is that of Sugar fermentation stimulation protein homolog from Pelobacter propionicus (strain DSM 2379 / NBRC 103807 / OttBd1).